The chain runs to 1753 residues: Negative regulator of sporulation PMD1 (1753 aa).

Kelch repeat units lie at residues 143-198 and 206-253; these read NIYI…VLNE and KLII…KILV. Phosphothreonine is present on T298. A compositionally biased stretch (polar residues) spans 651–664; sequence TTKFGNSSQSSNGS. Disordered regions lie at residues 651-753 and 771-807; these read TTKF…TTCS and LGLS…CTLS. Low complexity predominate over residues 670 to 683; sequence SKNGNSKSNSNTSL. 4 stretches are compositionally biased toward polar residues: residues 690 to 699, 740 to 753, 774 to 783, and 797 to 807; these read DFTSSTSSPK, TGTS…TTCS, SEQSGRSTRA, and NDGNDSNCTLS. The residue at position 838 (S838) is a Phosphoserine. Disordered stretches follow at residues 875-915, 938-957, and 962-988; these read IASP…LGSS, PLEP…SSLA, and FGRD…ARRI. Positions 880 to 900 are enriched in low complexity; it reads QSRQTSFASTASTASVVSSTS. The span at 938-947 shows a compositional bias: pro residues; it reads PLEPLPPVPK. The span at 979 to 988 shows a compositional bias: low complexity; the sequence is KSSSSDARRI. Phosphoserine is present on residues S1289, S1307, and S1356. Disordered stretches follow at residues 1312–1467, 1604–1686, and 1706–1753; these read SPAT…DLDS, PIFA…NKRF, and SAVN…GKRR. The span at 1344-1379 shows a compositional bias: polar residues; that stretch reads VSRQQNFPRRSSSFTETVPTEPTRYNYQNLDSSKSN. A compositionally biased stretch (basic and acidic residues) spans 1399–1430; the sequence is NFDKYKVETLQKRNSNDGKDLDRTNDPLKNRG. Positions 1653–1677 are enriched in polar residues; that stretch reads IKFSQAPSTQISPRTSVTDFTASQQ. Phosphoserine is present on S1664. The segment covering 1711–1723 has biased composition (basic and acidic residues); it reads GRKESEGHCEDRS.

It localises to the cytoplasm. Negatively regulates early sporulation-specific genes. Seems to exert its function by positively regulating the Ras/cAMP pathway. Required for growth under alkaline conditions. Acts synergetically with MDS3. The chain is Negative regulator of sporulation PMD1 (PMD1) from Saccharomyces cerevisiae (strain ATCC 204508 / S288c) (Baker's yeast).